Reading from the N-terminus, the 309-residue chain is Ornithine carbamoyltransferase (309 aa).

Carbamoyl phosphate contacts are provided by residues 51 to 54 (STRT), Gln78, Arg102, and 129 to 132 (HPCQ). Residues Asn161, Asp225, and 229-230 (SM) contribute to the L-ornithine site. Carbamoyl phosphate-binding positions include 265–266 (CL) and Arg293.

The protein belongs to the aspartate/ornithine carbamoyltransferase superfamily. OTCase family.

It localises to the cytoplasm. The catalysed reaction is carbamoyl phosphate + L-ornithine = L-citrulline + phosphate + H(+). The protein operates within amino-acid biosynthesis; L-arginine biosynthesis; L-arginine from L-ornithine and carbamoyl phosphate: step 1/3. Its function is as follows. Reversibly catalyzes the transfer of the carbamoyl group from carbamoyl phosphate (CP) to the N(epsilon) atom of ornithine (ORN) to produce L-citrulline. In Mycolicibacterium paratuberculosis (strain ATCC BAA-968 / K-10) (Mycobacterium paratuberculosis), this protein is Ornithine carbamoyltransferase.